The sequence spans 141 residues: Globin, extracellular monomeric (141 aa).

The 141-residue stretch at 1 to 141 (ECDALQRFKV…LGVITGAIHD (141 aa)) folds into the Globin domain. Residues C2 and C131 are joined by a disulfide bond. H94 lines the heme b pocket.

This sequence belongs to the globin family. As to quaternary structure, the giant hemoglobins of worms are formed of a monomeric subunit and a disulfide-bonded trimer. This subunit is monomeric.

The protein resides in the secreted. In Tubifex tubifex (Sludge worm), this protein is Globin, extracellular monomeric.